The primary structure comprises 77 residues: uncharacterized protein (77 aa).

A Peptidase A1 domain is found at 1 to 77; that stretch reads MAFERQGKIE…VAILDGKLVW (77 aa).

This is an uncharacterized protein from Saccharomyces cerevisiae (strain ATCC 204508 / S288c) (Baker's yeast).